A 41-amino-acid polypeptide reads, in one-letter code: Fibrinogen beta chain (41 aa).

The segment at 1 to 41 (ADDYDDEVLPDARGHRPIDRKREELPSLRPAPPPISGGGYR) is disordered. At Tyr4 the chain carries Sulfotyrosine. A compositionally biased stretch (basic and acidic residues) spans 10–26 (PDARGHRPIDRKREELP). The beta-chain polymerization, binding distal domain of another fibrin stretch occupies residues 14 to 16 (GHR).

Heterohexamer; disulfide linked. Contains 2 sets of 3 non-identical chains (alpha, beta and gamma). The 2 heterotrimers are in head to head conformation with the N-termini in a small central domain. Post-translationally, conversion of fibrinogen to fibrin is triggered by thrombin, which cleaves fibrinopeptides A and B from alpha and beta chains, and thus exposes the N-terminal polymerization sites responsible for the formation of the soft clot.

Its subcellular location is the secreted. In terms of biological role, cleaved by the protease thrombin to yield monomers which, together with fibrinogen alpha (FGA) and fibrinogen gamma (FGG), polymerize to form an insoluble fibrin matrix. Fibrin has a major function in hemostasis as one of the primary components of blood clots. In addition, functions during the early stages of wound repair to stabilize the lesion and guide cell migration during re-epithelialization. Was originally thought to be essential for platelet aggregation, based on in vitro studies using anticoagulated blood. However subsequent studies have shown that it is not absolutely required for thrombus formation in vivo. Enhances expression of SELP in activated platelets. Maternal fibrinogen is essential for successful pregnancy. Fibrin deposition is also associated with infection, where it protects against IFNG-mediated hemorrhage. May also facilitate the antibacterial immune response via both innate and T-cell mediated pathways. This Oryctolagus cuniculus (Rabbit) protein is Fibrinogen beta chain (FGB).